We begin with the raw amino-acid sequence, 244 residues long: Glucosamine-6-phosphate deaminase (244 aa).

The active-site Proton acceptor; for enolization step is the Asp67. Asn136 (for ring-opening step) is an active-site residue. His138 functions as the Proton acceptor; for ring-opening step in the catalytic mechanism. The active-site For ring-opening step is Glu143.

Belongs to the glucosamine/galactosamine-6-phosphate isomerase family. NagB subfamily.

The enzyme catalyses alpha-D-glucosamine 6-phosphate + H2O = beta-D-fructose 6-phosphate + NH4(+). The protein operates within amino-sugar metabolism; N-acetylneuraminate degradation; D-fructose 6-phosphate from N-acetylneuraminate: step 5/5. Catalyzes the reversible isomerization-deamination of glucosamine 6-phosphate (GlcN6P) to form fructose 6-phosphate (Fru6P) and ammonium ion. This is Glucosamine-6-phosphate deaminase from Clostridium botulinum (strain Okra / Type B1).